Reading from the N-terminus, the 152-residue chain is Stigma-specific STIG1-like protein 1 (152 aa).

The N-terminal stretch at 1–19 (MAFVKLLVSIAITTAITIA) is a signal peptide.

The protein belongs to the STIG1 family.

In Arabidopsis thaliana (Mouse-ear cress), this protein is Stigma-specific STIG1-like protein 1.